A 122-amino-acid chain; its full sequence is Large ribosomal subunit protein eL22B (122 aa).

It belongs to the eukaryotic ribosomal protein eL22 family. In terms of assembly, component of the large ribosomal subunit (LSU). Mature yeast ribosomes consist of a small (40S) and a large (60S) subunit. The 40S small subunit contains 1 molecule of ribosomal RNA (18S rRNA) and 33 different proteins (encoded by 57 genes). The large 60S subunit contains 3 rRNA molecules (25S, 5.8S and 5S rRNA) and 46 different proteins (encoded by 81 genes).

It is found in the cytoplasm. Functionally, component of the ribosome, a large ribonucleoprotein complex responsible for the synthesis of proteins in the cell. The small ribosomal subunit (SSU) binds messenger RNAs (mRNAs) and translates the encoded message by selecting cognate aminoacyl-transfer RNA (tRNA) molecules. The large subunit (LSU) contains the ribosomal catalytic site termed the peptidyl transferase center (PTC), which catalyzes the formation of peptide bonds, thereby polymerizing the amino acids delivered by tRNAs into a polypeptide chain. The nascent polypeptides leave the ribosome through a tunnel in the LSU and interact with protein factors that function in enzymatic processing, targeting, and the membrane insertion of nascent chains at the exit of the ribosomal tunnel. This chain is Large ribosomal subunit protein eL22B, found in Saccharomyces cerevisiae (strain ATCC 204508 / S288c) (Baker's yeast).